Here is a 308-residue protein sequence, read N- to C-terminus: Acetylglutamate kinase (308 aa).

Substrate-binding positions include 86 to 87 (GG), Arg-108, and Asn-201.

It belongs to the acetylglutamate kinase family. ArgB subfamily.

Its subcellular location is the cytoplasm. The catalysed reaction is N-acetyl-L-glutamate + ATP = N-acetyl-L-glutamyl 5-phosphate + ADP. Its pathway is amino-acid biosynthesis; L-arginine biosynthesis; N(2)-acetyl-L-ornithine from L-glutamate: step 2/4. Its function is as follows. Catalyzes the ATP-dependent phosphorylation of N-acetyl-L-glutamate. This Prochlorococcus marinus (strain MIT 9303) protein is Acetylglutamate kinase.